Consider the following 97-residue polypeptide: Large ribosomal subunit protein uL23 (97 aa).

This sequence belongs to the universal ribosomal protein uL23 family. In terms of assembly, part of the 50S ribosomal subunit. Contacts protein L29, and trigger factor when it is bound to the ribosome.

Functionally, one of the early assembly proteins it binds 23S rRNA. One of the proteins that surrounds the polypeptide exit tunnel on the outside of the ribosome. Forms the main docking site for trigger factor binding to the ribosome. The polypeptide is Large ribosomal subunit protein uL23 (Rhizobium rhizogenes (strain K84 / ATCC BAA-868) (Agrobacterium radiobacter)).